Consider the following 255-residue polypeptide: Protein 2b (255 aa).

It belongs to the tobravirus protein 2b family.

The protein localises to the virion. May function by interacting with a small, flexible domain located at the C-terminus of the CP, forming a bridge between the virus particle and the internal surface of the vector nematode feeding apparatus. The protein is Protein 2b of Tobacco rattle virus (strain TCM).